The primary structure comprises 154 residues: Transcriptional repressor NrdR (154 aa).

Residues 3 to 34 fold into a zinc finger; sequence CPFCRHPDSRVVDSRETDEGQAIRRRRSCPEC. The ATP-cone domain maps to 46–136; the sequence is LAVVKRSGVT…VYRSFSSAED (91 aa).

This sequence belongs to the NrdR family. The cofactor is Zn(2+).

Negatively regulates transcription of bacterial ribonucleotide reductase nrd genes and operons by binding to NrdR-boxes. This chain is Transcriptional repressor NrdR, found in Mycolicibacterium vanbaalenii (strain DSM 7251 / JCM 13017 / BCRC 16820 / KCTC 9966 / NRRL B-24157 / PYR-1) (Mycobacterium vanbaalenii).